A 117-amino-acid chain; its full sequence is Large ribosomal subunit protein bL20 (117 aa).

The protein belongs to the bacterial ribosomal protein bL20 family.

In terms of biological role, binds directly to 23S ribosomal RNA and is necessary for the in vitro assembly process of the 50S ribosomal subunit. It is not involved in the protein synthesizing functions of that subunit. In Mesomycoplasma hyopneumoniae (strain J / ATCC 25934 / NCTC 10110) (Mycoplasma hyopneumoniae), this protein is Large ribosomal subunit protein bL20.